A 187-amino-acid polypeptide reads, in one-letter code: Ribosome-recycling factor (187 aa).

Belongs to the RRF family.

The protein resides in the cytoplasm. Functionally, responsible for the release of ribosomes from messenger RNA at the termination of protein biosynthesis. May increase the efficiency of translation by recycling ribosomes from one round of translation to another. The sequence is that of Ribosome-recycling factor from Methylobacterium sp. (strain 4-46).